The chain runs to 38 residues: Photosystem I reaction center subunit IX (38 aa).

The helical transmembrane segment at 4 to 24 threads the bilayer; the sequence is FLTAAPVVAAIWFTATAGILI.

The protein belongs to the PsaJ family.

Its subcellular location is the cellular thylakoid membrane. In terms of biological role, may help in the organization of the PsaE and PsaF subunits. This chain is Photosystem I reaction center subunit IX, found in Synechococcus sp. (strain CC9605).